A 1161-amino-acid chain; its full sequence is Nuclear receptor-interacting protein 1 (1161 aa).

Residues 1 to 416 form an interaction with ZNF366 region; the sequence is MTHGEELGSD…FESSTPTTID (416 aa). Residues 21-25 carry the LXXLL motif 1 motif; it reads LEGLL. A disordered region spans residues 34–68; it reads GTAINKKSAGHKEEDQNFNLSGSAFPSCQSNGPTV. The span at 50–68 shows a compositional bias: polar residues; it reads NFNLSGSAFPSCQSNGPTV. Residues 78–335 are repression domain 1; the sequence is MLHLKKARLL…LNGQARALPA (258 aa). S104 bears the Phosphoserine mark. An N6-acetyllysine; alternate modification is found at K111. A Glycyl lysine isopeptide (Lys-Gly) (interchain with G-Cter in SUMO2); alternate cross-link involves residue K111. Positions 133-137 match the LXXLL motif 2 motif; it reads LASLL. N6-acetyllysine is present on K158. A Glycyl lysine isopeptide (Lys-Gly) (interchain with G-Cter in SUMO2) cross-link involves residue K170. Positions 185-189 match the LXXLL motif 3 motif; the sequence is LKTLL. Residues K195 and K198 each participate in a glycyl lysine isopeptide (Lys-Gly) (interchain with G-Cter in SUMO2) cross-link. Phosphothreonine is present on T207. Residue S218 is modified to Phosphoserine. The short motif at 267–271 is the LXXLL motif 4 element; it reads LALLL. Residues K287 and K311 each carry the N6-acetyllysine modification. S358 bears the Phosphoserine mark. K374 participates in a covalent cross-link: Glycyl lysine isopeptide (Lys-Gly) (interchain with G-Cter in SUMO2). Residue S380 is modified to Phosphoserine. The short motif at 382 to 386 is the LXXLL motif 5 element; sequence LLHLL. Residues 393–436 form a disordered region; that stretch reads TPMNGHSQNERASSFESSTPTTIDEYSDNNPSFTDDSSGDESSY. Residues 411–701 are repression domain 2; that stretch reads TPTTIDEYSD…PAGPEPGLPG (291 aa). The tract at residues 432–473 is required for targeting to small nuclear foci; the sequence is DESSYSNCVPIDLSCKHRIEKPEAERPVSLENLTQSLLNTWD. The CTBP-binding; principal site motif lies at 441-447; that stretch reads PIDLSCK. N6-acetyllysine occurs at positions 447 and 482. A Phosphoserine modification is found at S488. The LXXLL motif 6 signature appears at 501–505; the sequence is LLQLL. Residue K509 forms a Glycyl lysine isopeptide (Lys-Gly) (interchain with G-Cter in SUMO2) linkage. Positions 517-552 are enriched in polar residues; sequence NASPQDIHSDGTKFSPQNYTRTSVIESPSTNRTTPV. The disordered stretch occupies residues 517–559; sequence NASPQDIHSDGTKFSPQNYTRTSVIESPSTNRTTPVSTPPLYT. S519 is modified (phosphoserine). K529 bears the N6-acetyllysine mark. S531, S543, and S565 each carry phosphoserine. Residues 566 to 570 carry the CTBP-binding motif; that stretch reads PINLS. 3 disordered regions span residues 604–623, 639–702, and 717–747; these read TKGK…AQNS, GLQS…LPGC, and LLGN…ERAA. At K607 the chain carries N6-acetyllysine. S672 carries the post-translational modification Phosphoserine. The LXXLL motif 7 signature appears at 714-718; it reads LQLLL. Basic and acidic residues predominate over residues 724-747; the sequence is GKNEKKEKTPARDEAPQEHSERAA. The tract at residues 736 to 886 is repression domain 3; that stretch reads DEAPQEHSER…TAVDTANHHS (151 aa). The segment at 754-1161 is interaction with ZNF366; that stretch reads VKIKSEPCDD…NALTIKKESE (408 aa). Glycyl lysine isopeptide (Lys-Gly) (interchain with G-Cter in SUMO2) cross-links involve residues K757 and K803. Residue S808 is modified to Phosphoserine. The short motif at 820–824 is the LXXLL motif 8 element; it reads LSRLL. Residues 829–848 form a disordered region; the sequence is ESYPADEQDKSHRNSELPTL. Glycyl lysine isopeptide (Lys-Gly) (interchain with G-Cter in SUMO2) cross-links involve residues K851 and K902. The residue at position 932 (K932) is an N6-acetyllysine; alternate. Residue K932 forms a Glycyl lysine isopeptide (Lys-Gly) (interchain with G-Cter in SUMO2); alternate linkage. The LXXLL motif 9 signature appears at 937 to 941; it reads LKQLL. The CTBP-binding motif lies at 947-951; it reads VRDLS. Positions 950–962 are enriched in basic and acidic residues; sequence LSPHRSDSVPDTK. Residues 950–976 form a disordered region; the sequence is LSPHRSDSVPDTKKKGHKNNAPGSKPE. Phosphoserine is present on S1003. The interval 1063 to 1076 is ligand-dependent nuclear receptor binding; it reads LTKTNPILYYMLQK. Glycyl lysine isopeptide (Lys-Gly) (interchain with G-Cter in SUMO2) cross-links involve residues K1108, K1118, and K1157. The tract at residues 1121–1161 is repression domain 4; it reads FFNLRSPYNSHMGNNASRPHSTNGEVYGLLGNALTIKKESE.

Interacts with CTBP1, CTBP2, ERS1, HDAC1, HDAC2, HDAC5, HDAC6, NR2C2, NR3C1, NR3C2, YWHAH, JUN and FOS. Found in a complex with both NR3C1 and YWHAH. Interacts with NR2C1 (sumoylated form and via the ligand-binding domain); the interaction results in promoting the repressor activity of NR2C1. Interacts with RARA and RXRB homodimers and RARA/RXRB heterodimers in the presence of ligand. Interacts with HDAC1 and HDAC3 via its N-terminal domain. Interacts with ZNF366. Interacts with RORA. Acetylation abolishes interaction with CTBP1. Phosphorylation enhances interaction with YWHAH. Acetylation regulates its nuclear translocation and corepressive activity. As to expression, expressed in the embryonic placenta. In the adult, expression is strong in the testis and brain. Also expressed at a high level in the white adipose tissue. Expressed constantly but at a weaker level in the adult heart, lung, stomach and kidney. Expressed moderately in the skeletal muscle. Expressed at a low level in the adult spleen, liver and brown adipose tissue. Expressed in the ovary at a high level in granulosa cells and at a lower level in the thecal and interstitial compartments.

It localises to the nucleus. In terms of biological role, modulates transcriptional repression by nuclear hormone receptors such as NR2C1, thyroid hormone receptor and retinoic acid receptor/RARA. Essential for cumulus expansion and follicle rupture during ovulation. Also controls the balance between fat accumulation and energy expenditure. Positive regulator of the circadian clock gene expression: stimulates transcription of BMAL1, CLOCK and CRY1 by acting as a coactivator for RORA and RORC. Involved in the regulation of ovarian function. Plays a role in renal development. The polypeptide is Nuclear receptor-interacting protein 1 (Mus musculus (Mouse)).